An 872-amino-acid chain; its full sequence is Alanine--tRNA ligase (872 aa).

4 residues coordinate Zn(2+): His563, His567, Cys665, and His669.

Belongs to the class-II aminoacyl-tRNA synthetase family. Zn(2+) is required as a cofactor.

Its subcellular location is the cytoplasm. The catalysed reaction is tRNA(Ala) + L-alanine + ATP = L-alanyl-tRNA(Ala) + AMP + diphosphate. Catalyzes the attachment of alanine to tRNA(Ala) in a two-step reaction: alanine is first activated by ATP to form Ala-AMP and then transferred to the acceptor end of tRNA(Ala). Also edits incorrectly charged Ser-tRNA(Ala) and Gly-tRNA(Ala) via its editing domain. The protein is Alanine--tRNA ligase of Bacteroides fragilis (strain ATCC 25285 / DSM 2151 / CCUG 4856 / JCM 11019 / LMG 10263 / NCTC 9343 / Onslow / VPI 2553 / EN-2).